The sequence spans 204 residues: Probable nicotinate-nucleotide adenylyltransferase (204 aa).

Belongs to the NadD family.

The enzyme catalyses nicotinate beta-D-ribonucleotide + ATP + H(+) = deamido-NAD(+) + diphosphate. It participates in cofactor biosynthesis; NAD(+) biosynthesis; deamido-NAD(+) from nicotinate D-ribonucleotide: step 1/1. Functionally, catalyzes the reversible adenylation of nicotinate mononucleotide (NaMN) to nicotinic acid adenine dinucleotide (NaAD). The polypeptide is Probable nicotinate-nucleotide adenylyltransferase (Dehalococcoides mccartyi (strain CBDB1)).